A 344-amino-acid chain; its full sequence is Endo-1,4-beta-xylanase UM03411 (344 aa).

The first 21 residues, Met-1 to Ala-21, serve as a signal peptide directing secretion. The GH10 domain occupies Gln-35–Thr-338. Glu-166 acts as the Proton donor in catalysis. Asn-171 carries N-linked (GlcNAc...) asparagine glycosylation. The active-site Nucleophile is the Glu-275. Cysteines 293 and 299 form a disulfide. N-linked (GlcNAc...) asparagine glycans are attached at residues Asn-310 and Asn-323.

This sequence belongs to the glycosyl hydrolase 10 (cellulase F) family.

Its subcellular location is the secreted. It catalyses the reaction Endohydrolysis of (1-&gt;4)-beta-D-xylosidic linkages in xylans.. It participates in glycan degradation; xylan degradation. In terms of biological role, endo-1,4-beta-xylanase involved in the hydrolysis of xylan, a major structural heterogeneous polysaccharide found in plant biomass representing the second most abundant polysaccharide in the biosphere, after cellulose. The polypeptide is Endo-1,4-beta-xylanase UM03411 (Mycosarcoma maydis (Corn smut fungus)).